Reading from the N-terminus, the 192-residue chain is Orotate phosphoribosyltransferase (192 aa).

A 5-phospho-alpha-D-ribose 1-diphosphate-binding site is contributed by 116 to 124; it reads EDIVTTGLS. Orotate contacts are provided by Thr120 and Arg148.

Belongs to the purine/pyrimidine phosphoribosyltransferase family. PyrE subfamily. In terms of assembly, homodimer. It depends on Mg(2+) as a cofactor.

It catalyses the reaction orotidine 5'-phosphate + diphosphate = orotate + 5-phospho-alpha-D-ribose 1-diphosphate. It functions in the pathway pyrimidine metabolism; UMP biosynthesis via de novo pathway; UMP from orotate: step 1/2. Functionally, catalyzes the transfer of a ribosyl phosphate group from 5-phosphoribose 1-diphosphate to orotate, leading to the formation of orotidine monophosphate (OMP). The polypeptide is Orotate phosphoribosyltransferase (Bartonella tribocorum (strain CIP 105476 / IBS 506)).